The following is a 376-amino-acid chain: Dihydroorotate dehydrogenase (quinone) (376 aa).

Residues 74-78 (AGFDK) and Thr-98 contribute to the FMN site. Lys-78 is a substrate binding site. 123 to 127 (NHMGF) contributes to the substrate binding site. Positions 152 and 185 each coordinate FMN. Asn-185 serves as a coordination point for substrate. Catalysis depends on Ser-188, which acts as the Nucleophile. Position 190 (Asn-190) interacts with substrate. FMN is bound by residues Lys-223 and Thr-251. 252–253 (NT) contributes to the substrate binding site. Residues Gly-280, Gly-309, and 330–331 (YT) each bind FMN. Residues 352–376 (RNPAPSSPERMPTGIQSGRKIVMDP) form a disordered region.

The protein belongs to the dihydroorotate dehydrogenase family. Type 2 subfamily. As to quaternary structure, monomer. Requires FMN as cofactor.

Its subcellular location is the cell membrane. It catalyses the reaction (S)-dihydroorotate + a quinone = orotate + a quinol. Its pathway is pyrimidine metabolism; UMP biosynthesis via de novo pathway; orotate from (S)-dihydroorotate (quinone route): step 1/1. In terms of biological role, catalyzes the conversion of dihydroorotate to orotate with quinone as electron acceptor. This Synechococcus sp. (strain JA-3-3Ab) (Cyanobacteria bacterium Yellowstone A-Prime) protein is Dihydroorotate dehydrogenase (quinone).